The chain runs to 646 residues: Zinc finger protein 503 (646 aa).

Residues 1–11 (MSTAPSLSALR) show a composition bias toward polar residues. Positions 1 to 70 (MSTAPSLSAL…PPSDPLRQAN (70 aa)) are disordered. Gly residues predominate over residues 16–28 (SGGGGGGGGGGGA). A compositionally biased stretch (low complexity) spans 34 to 52 (SALSGNSSGPGPGSSPAGS). Residue serine 102 is modified to Phosphoserine. A disordered region spans residues 121–332 (SQIGKPDPSP…PSAPTSSSVL (212 aa)). Over residues 130-139 (PSSKLSSVAS) the composition is skewed to low complexity. Composition is skewed to gly residues over residues 140–152 (NGGG…GGAA) and 189–205 (GGGG…GGGV). At lysine 209 the chain carries N6-acetyllysine. Over residues 217-226 (ATCQPFTPRT) the composition is skewed to polar residues. Residues 227-240 (GSPSSSASACSPGG) show a composition bias toward low complexity. 2 positions are modified to phosphoserine: serine 231 and serine 237. Residues 250–259 (EGKDDKKDTD) are compositionally biased toward basic and acidic residues. Composition is skewed to gly residues over residues 260 to 277 (VGGG…GGPT) and 300 to 315 (GGPG…GGSS). The span at 316 to 330 (GSSSGSGPSAPTSSS) shows a compositional bias: low complexity. The C2H2-type zinc-finger motif lies at 514-542 (HICNWVSANGPCDKRFATSEELLSHLRTH). Omega-N-methylarginine is present on arginine 636.

The protein belongs to the Elbow/Noc family.

It localises to the nucleus. May function as a transcriptional repressor. This Homo sapiens (Human) protein is Zinc finger protein 503 (ZNF503).